The following is a 65-amino-acid chain: MPKMKTKSSAKKRFSIRAGGSIKRGQAFKRHILTKKTTKVKRHLRGATAVHERDAASVRAMMPYA.

A compositionally biased stretch (basic residues) spans 1-15; it reads MPKMKTKSSAKKRFS. A disordered region spans residues 1 to 21; it reads MPKMKTKSSAKKRFSIRAGGS.

It belongs to the bacterial ribosomal protein bL35 family.

This chain is Large ribosomal subunit protein bL35, found in Dechloromonas aromatica (strain RCB).